The sequence spans 239 residues: Seed lectin beta chain (239 aa).

The D-glucose site is built by aspartate 88 and glycine 106. Mn(2+) contacts are provided by glutamate 126 and aspartate 128. Residues aspartate 128, asparagine 132, and aspartate 137 each coordinate Ca(2+). Mn(2+) contacts are provided by aspartate 137 and histidine 142. D-glucose-binding residues include glycine 217 and alanine 218.

It belongs to the leguminous lectin family. Tetramer consisting of heterodimers of alpha and beta chains.

Functionally, galactose-binding lectin. Agglutinates human erythrocytes, and requires Ca(2+) and Mn(2+) ions for full agglutinating activity. Has antifungal activity against Fusarium sp., A.niger and A.flavus. The sequence is that of Seed lectin beta chain from Spatholobus parviflorus (Butea parviflora).